Reading from the N-terminus, the 319-residue chain is Beta-ketoacyl-[acyl-carrier-protein] synthase III (319 aa).

Catalysis depends on residues C113 and H246. The ACP-binding stretch occupies residues 247 to 251 (QANIR). N276 is a catalytic residue.

It belongs to the thiolase-like superfamily. FabH family. Homodimer.

It localises to the cytoplasm. It carries out the reaction malonyl-[ACP] + acetyl-CoA + H(+) = 3-oxobutanoyl-[ACP] + CO2 + CoA. Its pathway is lipid metabolism; fatty acid biosynthesis. In terms of biological role, catalyzes the condensation reaction of fatty acid synthesis by the addition to an acyl acceptor of two carbons from malonyl-ACP. Catalyzes the first condensation reaction which initiates fatty acid synthesis and may therefore play a role in governing the total rate of fatty acid production. Possesses both acetoacetyl-ACP synthase and acetyl transacylase activities. Its substrate specificity determines the biosynthesis of branched-chain and/or straight-chain of fatty acids. The polypeptide is Beta-ketoacyl-[acyl-carrier-protein] synthase III (Ehrlichia ruminantium (strain Gardel)).